Consider the following 307-residue polypeptide: Acetaldehyde dehydrogenase (307 aa).

The active-site Acyl-thioester intermediate is the Cys131. NAD(+) contacts are provided by residues 162 to 170 and Asn273; that span reads SIGPGTRKN.

It belongs to the acetaldehyde dehydrogenase family.

It catalyses the reaction acetaldehyde + NAD(+) + CoA = acetyl-CoA + NADH + H(+). The chain is Acetaldehyde dehydrogenase (nahO) from Stutzerimonas stutzeri (Pseudomonas stutzeri).